We begin with the raw amino-acid sequence, 251 residues long: UPF0309 protein SGR_3073 (251 aa).

In terms of domain architecture, SIS spans V36 to P221.

It belongs to the UPF0309 family.

In Streptomyces griseus subsp. griseus (strain JCM 4626 / CBS 651.72 / NBRC 13350 / KCC S-0626 / ISP 5235), this protein is UPF0309 protein SGR_3073.